Reading from the N-terminus, the 373-residue chain is Alpha-1,3-mannosyl-glycoprotein 4-beta-N-acetylglucosaminyltransferase-like protein MGAT4D (373 aa).

Over 1-5 (MKAKN) the chain is Cytoplasmic. Residues 6–26 (VNLLFAFVAVLLFGFSCFCIS) traverse the membrane as a helical; Signal-anchor for type II membrane protein segment. The Lumenal segment spans residues 27 to 373 (RMNQTNNQLI…REQHLKDNYY (347 aa)). Residues Asn-29, Asn-54, and Asn-144 are each glycosylated (N-linked (GlcNAc...) asparagine).

It belongs to the glycosyltransferase 54 family. Isoform 2 self-associates; specifically in the endoplasmic reticulum prior to its translocation to the Golgi. Isoform 1 and isoform 2 interact with MGAT1, MGAT3 and MAN2A2; isoform 2 interacts specifically with MGAT1 in the Golgi. In terms of processing, isoform 2 is N-glycosylated; consisting of high-mannose and/or hybrid glycans. In terms of tissue distribution, isoform 1 and isoform 2 are specifically expressed in testis. Isoform 2 is expressed in spermatocytes but not in spermatids. Isoform 1 is expressed in spermatids.

Its subcellular location is the endoplasmic reticulum membrane. The protein localises to the endoplasmic reticulum-Golgi intermediate compartment membrane. It localises to the golgi apparatus membrane. May play a role in male spermatogenesis. In vitro acts as inhibitor of MGAT1 activity causing cell surface proteins to carry mainly high mannose N-glycans. The function is mediated by its lumenal domain and occurs specifically in the Golgi. A catalytic glucosyltransferase activity is not detected. May be involved in regulation of Sertoli-germ cell interactions during specific stages of spermatogenesis. The protein is Alpha-1,3-mannosyl-glycoprotein 4-beta-N-acetylglucosaminyltransferase-like protein MGAT4D of Mus musculus (Mouse).